The sequence spans 331 residues: Cytosolic arginine sensor for mTORC1 subunit 1 (331 aa).

Phosphoserine is present on S14. The 68-residue stretch at 72–139 (AEATWLVMNV…SVVIHTLARE (68 aa)) folds into the ACT 1 domain. An L-arginine-binding site is contributed by 110–111 (SV). A disordered region spans residues 155–174 (GDDSSNGFPQAQHGPSPTVH). Over residues 156 to 174 (DDSSNGFPQAQHGPSPTVH) the composition is skewed to polar residues. Residues 262–322 (WRMVRIGGQP…SCVIDILQRR (61 aa)) enclose the ACT 2 domain. L-arginine contacts are provided by residues G273, 279 to 280 (IV), and 299 to 303 (TFNFD).

Belongs to the GATS family. In terms of assembly, forms homodimers and heterodimers with CASTOR2. Interacts with the GATOR2 complex which is composed of MIOS, SEC13, SEH1L, WDR24 and WDR59; the interaction is negatively regulated by arginine. Interacts with TM4SF5; the interaction is positively regulated by leucine and is negatively regulated by arginine. Post-translationally, phosphorylation at Ser-14 by AKT1, promoting the interaction between CASTOR1 and RNF167. In terms of processing, ubiquitinated by RNF167 via 'Lys-29'-polyubiquitination, leading to its degradation, releasing the GATOR2 complex. Ubiquitination by RNF167 is promoted by phosphorylation at Ser-14 by AKT1.

It localises to the cytoplasm. The protein resides in the cytosol. Its function is as follows. Functions as an intracellular arginine sensor within the amino acid-sensing branch of the TORC1 signaling pathway. As a homodimer or a heterodimer with CASTOR2, binds and inhibits the GATOR subcomplex GATOR2 and thereby mTORC1. Binding of arginine to CASTOR1 allosterically disrupts the interaction of CASTOR1-containing dimers with GATOR2 which can in turn activate mTORC1 and the TORC1 signaling pathway. This Rattus norvegicus (Rat) protein is Cytosolic arginine sensor for mTORC1 subunit 1.